Consider the following 212-residue polypeptide: 2',3'-cyclic-nucleotide 3'-phosphodiesterase (212 aa).

The active-site Proton donor/acceptor is histidine 51. Threonine 53 contacts substrate. Histidine 146 serves as the catalytic Proton donor/acceptor. Serine 148 and tyrosine 151 together coordinate substrate.

This sequence belongs to the 2H phosphoesterase superfamily. CPD1 family.

It is found in the golgi apparatus. The enzyme catalyses a nucleoside 2',3'-cyclic phosphate + H2O = a nucleoside 2'-phosphate + H(+). Its function is as follows. Involved in the metabolism of ADP-ribose 1',2'-cyclic phosphate which is produced as a consequence of tRNA splicing. The protein is 2',3'-cyclic-nucleotide 3'-phosphodiesterase (cpd-7) of Neurospora crassa (strain ATCC 24698 / 74-OR23-1A / CBS 708.71 / DSM 1257 / FGSC 987).